We begin with the raw amino-acid sequence, 244 residues long: UPF0246 protein FMG_1068 (244 aa).

It belongs to the UPF0246 family.

The sequence is that of UPF0246 protein FMG_1068 from Finegoldia magna (strain ATCC 29328 / DSM 20472 / WAL 2508) (Peptostreptococcus magnus).